The sequence spans 204 residues: UPF0637 protein lwe1043 (204 aa).

The protein belongs to the UPF0637 family.

The sequence is that of UPF0637 protein lwe1043 from Listeria welshimeri serovar 6b (strain ATCC 35897 / DSM 20650 / CCUG 15529 / CIP 8149 / NCTC 11857 / SLCC 5334 / V8).